The chain runs to 151 residues: MPRPFQIRKVTRLPKCKSFKPVGVPRKVLEQAILALDEYEAIRLADYLKLEHLEAAEKMGISRPTFTRLIERARTKLASAIIEAKELVIEGGHIDLQSTRLRCSDCGEEQQAEPSESSQNCPECGSENVEDMKLFFTGAKHGRQRRRRGRA.

It belongs to the UPF0251 family.

This is UPF0251 protein Ctha_0452 from Chloroherpeton thalassium (strain ATCC 35110 / GB-78).